We begin with the raw amino-acid sequence, 488 residues long: MSDITTLSLTALRDKLARKELSAVEAASACLARIEATEPKIHALLHCDAEAALAAAKALDAAGPNPDQRLWGVPVLVKDAICVKDAPTTCGSKILENFTPFYDASCIEKMRAAGAVILGKANMDEFAMGSSTENSAYKVTANPWDLGKVPGGSSGGSAAAVAAGQCFAALGTDTGGSIRQPAAFCGTVGIKPTYGRVSRYGLVAYGSSLDQIGPLTRTADDAAAVLGVIAGPDPKDSTCAPRDVPDFEAALAGAADLAGLTIGLPDEYWGEGVDAEVRDACRAAVDTAKSLGANVVPVSLPHTPYAVATYYIVAMAEASSNLARFDGVRYGYRAPEAQSLEELYELSRSKGFGPEVQRRIVIGAYVLSAGYYDAYYRKAAQVRRLIRQDFLNAFEKCDVICGPTSPFAAFTIGQMSDDPLQMYLSDIFTISLNLAGLPGLSMPVGLGTTSAMPIGMQLFGRAFDEATILRTAKVLGNALPPLPQPAAV.

Residues K78 and S153 each act as charge relay system in the active site. The Acyl-ester intermediate role is filled by S177.

Belongs to the amidase family. GatA subfamily. Heterotrimer of A, B and C subunits.

It carries out the reaction L-glutamyl-tRNA(Gln) + L-glutamine + ATP + H2O = L-glutaminyl-tRNA(Gln) + L-glutamate + ADP + phosphate + H(+). Its function is as follows. Allows the formation of correctly charged Gln-tRNA(Gln) through the transamidation of misacylated Glu-tRNA(Gln) in organisms which lack glutaminyl-tRNA synthetase. The reaction takes place in the presence of glutamine and ATP through an activated gamma-phospho-Glu-tRNA(Gln). This is Glutamyl-tRNA(Gln) amidotransferase subunit A from Solidesulfovibrio magneticus (strain ATCC 700980 / DSM 13731 / RS-1) (Desulfovibrio magneticus).